Reading from the N-terminus, the 338-residue chain is MSSAGKLPSEIERTLVRKSGAWTNPVYGCAPEKRPILEYIEKGVVNIDKPSGPTSHEVAAWVKAILGVNTAGHAGSLDPKVTGLLPTLLGKATKAVPALRLSGKEYVCHLKLHRAMPPKLVRKVCEEFTGPIYQMPPIKSAVKRVIRVRTIYYIEVLEIEGMSVLFRVGCEAGTYIRKLCHDIGLALGCGGHMQALRRTKAGPFTEKTLVTLHELKDAYVFWKEDGDESELRRVIRPMESAVSHLPKIILRDSAVDAVCSGASLAVPGITSLDSSLAEGELAALFTLKGELVALAKAEMNTEEILKASAGIAASPIRVLMEAGTYPKGWTKKEESVRL.

Catalysis depends on Asp-78, which acts as the Nucleophile. A PUA domain is found at 245 to 320; that stretch reads LPKIILRDSA…IAASPIRVLM (76 aa).

The protein belongs to the pseudouridine synthase TruB family. Type 2 subfamily.

The enzyme catalyses uridine(55) in tRNA = pseudouridine(55) in tRNA. Functionally, could be responsible for synthesis of pseudouridine from uracil-55 in the psi GC loop of transfer RNAs. The chain is Probable tRNA pseudouridine synthase B from Methanosarcina acetivorans (strain ATCC 35395 / DSM 2834 / JCM 12185 / C2A).